Consider the following 330-residue polypeptide: Deoxyhypusine hydroxylase (330 aa).

HEAT-like PBS-type repeat units lie at residues 57–83 (LKHE…VLRN), 90–116 (VRHE…YLSD), and 199–225 (ERYR…GFSG). Fe cation-binding residues include His59, Glu60, His92, and Glu93. The Fe cation site is built by His232, Glu233, His265, and Glu266. One copy of the HEAT-like PBS-type 4 repeat lies at 263–289 (VRHEAAEALGGIATPEVLPPLKEWVAR).

It belongs to the deoxyhypusine hydroxylase family. The cofactor is Fe(2+).

It is found in the cytoplasm. The protein resides in the nucleus. The catalysed reaction is [eIF5A protein]-deoxyhypusine + AH2 + O2 = [eIF5A protein]-hypusine + A + H2O. The protein operates within protein modification; eIF5A hypusination. Functionally, catalyzes the hydroxylation of the N(6)-(4-aminobutyl)-L-lysine intermediate to form hypusine, an essential post-translational modification only found in mature eIF-5A factor. This Lentinula edodes (Shiitake mushroom) protein is Deoxyhypusine hydroxylase.